We begin with the raw amino-acid sequence, 136 residues long: Large-conductance mechanosensitive channel (136 aa).

The next 2 helical transmembrane spans lie at Ala9–Phe29 and Ile79–Ile99.

Belongs to the MscL family. Homopentamer.

The protein localises to the cell inner membrane. Functionally, channel that opens in response to stretch forces in the membrane lipid bilayer. May participate in the regulation of osmotic pressure changes within the cell. This chain is Large-conductance mechanosensitive channel, found in Shewanella sp. (strain MR-4).